A 333-amino-acid polypeptide reads, in one-letter code: Probable cytosolic iron-sulfur protein assembly protein ciao1-B (333 aa).

WD repeat units follow at residues H14–K53, G59–L98, G103–C142, S148–R187, G192–E231, F246–Q285, and A297–V333.

Belongs to the WD repeat CIA1 family. In terms of assembly, component of the CIA complex.

Key component of the cytosolic iron-sulfur protein assembly (CIA) complex, a multiprotein complex that mediates the incorporation of iron-sulfur cluster into extramitochondrial Fe/S proteins. The protein is Probable cytosolic iron-sulfur protein assembly protein ciao1-B (ciao1b) of Salmo salar (Atlantic salmon).